We begin with the raw amino-acid sequence, 324 residues long: NADH-quinone oxidoreductase subunit H (324 aa).

Helical transmembrane passes span 11 to 31 (ILITVGKAVVILLVVVTCGAF), 81 to 101 (VIFTLAPMIAFTSMLIAFAIV), 114 to 134 (IGILFFLMMAGLAVYAVLFAG), 154 to 174 (VSYEVFIGLSLMGVVAQAGSF), 186 to 206 (LWNVIPQFFGFITFAIAGVAV), 237 to 257 (FFVGEYIGIVTVSALMVTLFF), 265 to 285 (LPPFVWFALKTGFFMMMFILI), and 304 to 324 (VCLPITLLNLLATAAVILYNA).

The protein belongs to the complex I subunit 1 family. NDH-1 is composed of 13 different subunits. Subunits NuoA, H, J, K, L, M, N constitute the membrane sector of the complex.

The protein localises to the cell inner membrane. The catalysed reaction is a quinone + NADH + 5 H(+)(in) = a quinol + NAD(+) + 4 H(+)(out). Its function is as follows. NDH-1 shuttles electrons from NADH, via FMN and iron-sulfur (Fe-S) centers, to quinones in the respiratory chain. The immediate electron acceptor for the enzyme in this species is believed to be ubiquinone. Couples the redox reaction to proton translocation (for every two electrons transferred, four hydrogen ions are translocated across the cytoplasmic membrane), and thus conserves the redox energy in a proton gradient. This subunit may bind ubiquinone. This chain is NADH-quinone oxidoreductase subunit H, found in Pectobacterium atrosepticum (strain SCRI 1043 / ATCC BAA-672) (Erwinia carotovora subsp. atroseptica).